The primary structure comprises 436 residues: Diaminobutyrate--2-oxoglutarate transaminase (436 aa).

The residue at position 269 (Lys-269) is an N6-(pyridoxal phosphate)lysine.

Belongs to the class-III pyridoxal-phosphate-dependent aminotransferase family. It depends on pyridoxal 5'-phosphate as a cofactor.

It catalyses the reaction L-2,4-diaminobutanoate + 2-oxoglutarate = L-aspartate 4-semialdehyde + L-glutamate. Its pathway is amine and polyamine biosynthesis; ectoine biosynthesis; L-ectoine from L-aspartate 4-semialdehyde: step 1/3. Its function is as follows. Catalyzes reversively the conversion of L-aspartate beta-semialdehyde (ASA) to L-2,4-diaminobutyrate (DABA) by transamination with L-glutamate. The chain is Diaminobutyrate--2-oxoglutarate transaminase (ectB) from Nocardia farcinica (strain IFM 10152).